Consider the following 145-residue polypeptide: 3-hydroxyacyl-[acyl-carrier-protein] dehydratase FabZ (145 aa).

H49 is an active-site residue.

The protein belongs to the thioester dehydratase family. FabZ subfamily.

It localises to the cytoplasm. It carries out the reaction a (3R)-hydroxyacyl-[ACP] = a (2E)-enoyl-[ACP] + H2O. In terms of biological role, involved in unsaturated fatty acids biosynthesis. Catalyzes the dehydration of short chain beta-hydroxyacyl-ACPs and long chain saturated and unsaturated beta-hydroxyacyl-ACPs. This is 3-hydroxyacyl-[acyl-carrier-protein] dehydratase FabZ from Rickettsia conorii (strain ATCC VR-613 / Malish 7).